Reading from the N-terminus, the 404-residue chain is MQYSEIMIRYGELSTKGKNRMRFINKLRNNISDVLSIYTQVKVTADRDRAHAYLNGADYTAVAESLKQVFGIQNFSPVYKVEKSVEVLKSSVQEIMRDIYKEGMTFKISSKRSDHNFELDSRELNQTLGGAVFEAIPNVQVQMKSPDINLQVEIREEAAYLSYETIRGAGGLPVGTSGKGMLMLSGGIDSPVAGYLALKRGVDIEAVHFASPPYTSPGALKKAQDLTRKLTKFGGNIQFIEVPFTEIQEEIKAKAPEAYLMTLTRRFMMRITDRIREVRNGLVIINGESLGQVASQTLESMKAINAVTNTPIIRPVVTMDKLEIIDIAQEIDTFDISIQPFEDCCTIFAPDRPKTNPKIKNAEQYEARMDVEGLVERAVAGIMITEITPQAEKDEVDDLIDNLL.

In terms of domain architecture, THUMP spans 60-165; the sequence is TAVAESLKQV…EEAAYLSYET (106 aa). ATP contacts are provided by residues 183 to 184, 208 to 209, Arg265, Gly287, and Gln296; these read ML and HF.

The protein belongs to the ThiI family.

The protein localises to the cytoplasm. It catalyses the reaction [ThiI sulfur-carrier protein]-S-sulfanyl-L-cysteine + a uridine in tRNA + 2 reduced [2Fe-2S]-[ferredoxin] + ATP + H(+) = [ThiI sulfur-carrier protein]-L-cysteine + a 4-thiouridine in tRNA + 2 oxidized [2Fe-2S]-[ferredoxin] + AMP + diphosphate. The enzyme catalyses [ThiS sulfur-carrier protein]-C-terminal Gly-Gly-AMP + S-sulfanyl-L-cysteinyl-[cysteine desulfurase] + AH2 = [ThiS sulfur-carrier protein]-C-terminal-Gly-aminoethanethioate + L-cysteinyl-[cysteine desulfurase] + A + AMP + 2 H(+). Its pathway is cofactor biosynthesis; thiamine diphosphate biosynthesis. Its function is as follows. Catalyzes the ATP-dependent transfer of a sulfur to tRNA to produce 4-thiouridine in position 8 of tRNAs, which functions as a near-UV photosensor. Also catalyzes the transfer of sulfur to the sulfur carrier protein ThiS, forming ThiS-thiocarboxylate. This is a step in the synthesis of thiazole, in the thiamine biosynthesis pathway. The sulfur is donated as persulfide by IscS. The sequence is that of Probable tRNA sulfurtransferase from Streptococcus pneumoniae serotype 19F (strain G54).